Reading from the N-terminus, the 556-residue chain is 5-aminolevulinate synthase, mitochondrial (556 aa).

Residues 1-46 constitute a mitochondrion transit peptide; the sequence is MDSLARQSAKICPFVSRVTSSMQQVQVLHKTNMSAMAQQCPVMRRA. Substrate contacts are provided by R105, S218, and K237. Pyridoxal 5'-phosphate contacts are provided by S270, H298, and T342. K345 is a catalytic residue. N6-(pyridoxal phosphate)lysine is present on K345. Pyridoxal 5'-phosphate is bound by residues T374 and S375. T460 contacts substrate.

The protein belongs to the class-II pyridoxal-phosphate-dependent aminotransferase family. Homodimer. The cofactor is pyridoxal 5'-phosphate.

It localises to the mitochondrion matrix. The catalysed reaction is succinyl-CoA + glycine + H(+) = 5-aminolevulinate + CO2 + CoA. It functions in the pathway porphyrin-containing compound metabolism; protoporphyrin-IX biosynthesis; 5-aminolevulinate from glycine: step 1/1. Functionally, catalyzes the synthesis of 5-aminolevulinate (ALA) from succinyl-CoA and glycine, the first and rate-limiting step in heme biosynthesis. The polypeptide is 5-aminolevulinate synthase, mitochondrial (HEM1) (Eremothecium gossypii (strain ATCC 10895 / CBS 109.51 / FGSC 9923 / NRRL Y-1056) (Yeast)).